Consider the following 244-residue polypeptide: ATP synthase subunit O, mitochondrial (244 aa).

The N-terminal 45 residues, 1–45 (MAMTGRARSMGFSILQKALSSAQRSNAHRSILCPTLSNSELLRNY), are a transit peptide targeting the mitochondrion.

This sequence belongs to the ATPase delta chain family. F-type ATPases have 2 components, CF(1) - the catalytic core - and CF(0) - the membrane proton channel. CF(1) has five subunits: alpha(3), beta(3), gamma(1), delta(1), epsilon(1). CF(0) has three main subunits: a, b and c.

The protein resides in the mitochondrion. The protein localises to the mitochondrion inner membrane. In terms of biological role, mitochondrial membrane ATP synthase (F(1)F(0) ATP synthase or Complex V) produces ATP from ADP in the presence of a proton gradient across the membrane which is generated by electron transport complexes of the respiratory chain. F-type ATPases consist of two structural domains, F(1) - containing the extramembraneous catalytic core and F(0) - containing the membrane proton channel, linked together by a central stalk and a peripheral stalk. During catalysis, ATP synthesis in the catalytic domain of F(1) is coupled via a rotary mechanism of the central stalk subunits to proton translocation. Part of the complex F(0) domain and the peripheric stalk, which acts as a stator to hold the catalytic alpha(3)beta(3) subcomplex and subunit a/ATP6 static relative to the rotary elements. In Ipomoea batatas (Sweet potato), this protein is ATP synthase subunit O, mitochondrial.